The following is a 303-amino-acid chain: Hemolysin E (303 aa).

Cys87 and Cys285 are oxidised to a cystine. Residues 179–199 (AGAAAGIVAGPFGLIISYSIA) traverse the membrane as a helical segment.

It belongs to the hemolysin E family. As to quaternary structure, monomer and oligomer. In periplasm, it is present as a monomer, while in outer membrane vesicles, it oligomerizes to form a pore structure that is active. The pore is formed by a dodecamer. In periplasm, it forms a disulfide bond, which prevents the oligomerization. In outer membrane vesicles, the redox status prevents formation of the disulfide bond, leading to oligomerization and pore formation.

It localises to the secreted. The protein resides in the periplasm. It is found in the host cell membrane. Toxin, which has some hemolytic activity towards mammalian cells. Acts by forming a pore-like structure upon contact with mammalian cells. The protein is Hemolysin E (hlyE) of Salmonella typhi.